We begin with the raw amino-acid sequence, 83 residues long: Apolipoprotein C-I, basic form (83 aa).

The N-terminal stretch at 1–26 is a signal peptide; it reads MRLFLSLPVLVVVLSMVLEGPAPVQG.

This sequence belongs to the apolipoprotein C1 family.

It localises to the secreted. Inhibitor of lipoprotein binding to the low density lipoprotein (LDL) receptor, LDL receptor-related protein, and very low density lipoprotein (VLDL) receptor. Associates with high density lipoproteins (HDL) and the triacylglycerol-rich lipoproteins in the plasma and makes up about 10% of the protein of the VLDL and 2% of that of HDL. Appears to interfere directly with fatty acid uptake and is also the major plasma inhibitor of cholesteryl ester transfer protein (CETP). Binds free fatty acids and reduces their intracellular esterification. Modulates the interaction of APOE with beta-migrating VLDL and inhibits binding of beta-VLDL to the LDL receptor-related protein. This Papio anubis (Olive baboon) protein is Apolipoprotein C-I, basic form (APOC1).